Here is a 414-residue protein sequence, read N- to C-terminus: CCA-adding enzyme (414 aa).

The ATP site is built by G8 and R11. 2 residues coordinate CTP: G8 and R11. Mg(2+) is bound by residues D21 and D23. ATP is bound by residues R91, R137, and R140. R91, R137, and R140 together coordinate CTP.

The protein belongs to the tRNA nucleotidyltransferase/poly(A) polymerase family. Bacterial CCA-adding enzyme type 2 subfamily. It depends on Mg(2+) as a cofactor.

The enzyme catalyses a tRNA precursor + 2 CTP + ATP = a tRNA with a 3' CCA end + 3 diphosphate. It catalyses the reaction a tRNA with a 3' CCA end + 2 CTP + ATP = a tRNA with a 3' CCACCA end + 3 diphosphate. In terms of biological role, catalyzes the addition and repair of the essential 3'-terminal CCA sequence in tRNAs without using a nucleic acid template. Adds these three nucleotides in the order of C, C, and A to the tRNA nucleotide-73, using CTP and ATP as substrates and producing inorganic pyrophosphate. tRNA 3'-terminal CCA addition is required both for tRNA processing and repair. Also involved in tRNA surveillance by mediating tandem CCA addition to generate a CCACCA at the 3' terminus of unstable tRNAs. While stable tRNAs receive only 3'-terminal CCA, unstable tRNAs are marked with CCACCA and rapidly degraded. In Buchnera aphidicola subsp. Acyrthosiphon pisum (strain 5A), this protein is CCA-adding enzyme.